A 246-amino-acid polypeptide reads, in one-letter code: Large ribosomal subunit protein uL3 (246 aa).

2 disordered regions span residues 140 to 162 and 215 to 246; these read SHRS…NKKM and DVPL…EENA. An N5-methylglutamine modification is found at Gln151. Low complexity predominate over residues 234–246; that stretch reads EAAPEAPASEENA.

This sequence belongs to the universal ribosomal protein uL3 family. In terms of assembly, part of the 50S ribosomal subunit. Forms a cluster with proteins L14 and L19. Methylated by PrmB.

Its function is as follows. One of the primary rRNA binding proteins, it binds directly near the 3'-end of the 23S rRNA, where it nucleates assembly of the 50S subunit. This Methylorubrum populi (strain ATCC BAA-705 / NCIMB 13946 / BJ001) (Methylobacterium populi) protein is Large ribosomal subunit protein uL3.